An 89-amino-acid chain; its full sequence is Small ribosomal subunit protein uS17 (89 aa).

The protein belongs to the universal ribosomal protein uS17 family. In terms of assembly, part of the 30S ribosomal subunit.

Functionally, one of the primary rRNA binding proteins, it binds specifically to the 5'-end of 16S ribosomal RNA. This chain is Small ribosomal subunit protein uS17, found in Xylella fastidiosa (strain 9a5c).